Reading from the N-terminus, the 841-residue chain is uncharacterized protein (841 aa).

Residues 1 to 31 (MKIERYFKAIARAFIITFLFSLILQDNGVLA) form the signal peptide.

It localises to the secreted. This is an uncharacterized protein from Schizosaccharomyces pombe (strain 972 / ATCC 24843) (Fission yeast).